Here is a 446-residue protein sequence, read N- to C-terminus: Fatty acid desaturase 2 (446 aa).

At 1–132 the chain is on the cytoplasmic side; that stretch reads MGMGGQSGEG…EDMRLFKSNP (132 aa). Positions 20 to 97 constitute a Cytochrome b5 heme-binding domain; sequence EAQYSWEEIQ…LKPLYIGELA (78 aa). The chain crosses the membrane as a helical span at residues 133–153; the sequence is AFFIFYLFHILLIEFLAWCTL. A topological domain (lumenal) is located at residue His154. The chain crosses the membrane as a helical span at residues 155–175; sequence YLGTGWIPAIITVLLLTISQA. At 176-265 the chain is on the cytoplasmic side; that stretch reads QAGWLQHDFG…IKYLPYNHQH (90 aa). Positions 182 to 186 match the Histidine box-1 motif; that stretch reads HDFGH. The short motif at 219–223 is the Histidine box-2 element; it reads HFQHH. Residues 266 to 286 form a helical membrane-spanning segment; the sequence is LYFFLIGPPLLIPVYFTVQII. Over 287–307 the chain is Lumenal; that stretch reads KTMIARKDWVDLAWSVSYYVR. A helical transmembrane segment spans residues 308–328; that stretch reads FFFTFVPFFGVLGSLALLNAV. Topologically, residues 329 to 446 are cytoplasmic; sequence RFFESHWFVW…QLWLDAYLHK (118 aa). The Histidine box-3 motif lies at 384 to 388; the sequence is QIEHH.

It belongs to the fatty acid desaturase type 1 family.

The protein resides in the endoplasmic reticulum membrane. Its pathway is lipid metabolism; polyunsaturated fatty acid biosynthesis. In terms of biological role, component of a lipid metabolic pathway that catalyzes biosynthesis of highly unsaturated fatty acids (HUFA) from precursor essential polyunsaturated fatty acids (PUFA) linoleic acid (LA) (18:2n-6) and alpha-linolenic acid (ALA) (18:3n-3). Catalyzes the first and rate limiting step in this pathway which is the desaturation of LA (18:2n-6) and ALA (18:3n-3) into gamma-linoleic acid (GLA) (18:3n-6) and stearidonic acid (18:4n-3) respectively and other desaturation steps. Highly unsaturated fatty acids (HUFA) play pivotal roles in many biological functions. The sequence is that of Fatty acid desaturase 2 (fads2) from Xenopus laevis (African clawed frog).